The sequence spans 470 residues: 6-phosphofructo-2-kinase/fructose-2,6-bisphosphatase (470 aa).

Residues 1 to 249 (MADRLRELTQ…VYYLMNIHVT (249 aa)) form a 6-phosphofructo-2-kinase region. Residue S31 is modified to Phosphoserine; by PKA. ATP is bound at residue 47–55 (GLPARGKTY). The beta-D-fructose 6-phosphate site is built by R80 and R104. D130 is a catalytic residue. Beta-D-fructose 6-phosphate is bound by residues T132 and R138. Residue C160 is part of the active site. 169 to 174 (NITQVK) contributes to the ATP binding site. Residues K174, R195, and Y199 each contribute to the beta-D-fructose 6-phosphate site. Residues 250-470 (PRSIYLSRHG…EALDTVPEHF (221 aa)) are fructose-2,6-bisphosphatase. Residue R257 participates in beta-D-fructose 2,6-bisphosphate binding. H258 serves as the catalytic Tele-phosphohistidine intermediate. Residues N264 and G270 each coordinate beta-D-fructose 2,6-bisphosphate. E327 functions as the Proton donor/acceptor in the catalytic mechanism. Y338, R352, K356, Y367, Q393, and R397 together coordinate beta-D-fructose 2,6-bisphosphate. Residue 349 to 352 (FALR) participates in ATP binding. Residues 393–397 (QAVMR) and Y429 contribute to the ATP site.

It in the C-terminal section; belongs to the phosphoglycerate mutase family. As to quaternary structure, homodimer.

The enzyme catalyses beta-D-fructose 2,6-bisphosphate + H2O = beta-D-fructose 6-phosphate + phosphate. It carries out the reaction beta-D-fructose 6-phosphate + ATP = beta-D-fructose 2,6-bisphosphate + ADP + H(+). Phosphorylation results in inhibition of the kinase activity. In terms of biological role, synthesis and degradation of fructose 2,6-bisphosphate. The protein is 6-phosphofructo-2-kinase/fructose-2,6-bisphosphatase of Aquarana catesbeiana (American bullfrog).